A 291-amino-acid polypeptide reads, in one-letter code: 33 kDa chaperonin (291 aa).

Cystine bridges form between Cys-235-Cys-237 and Cys-268-Cys-271.

Belongs to the HSP33 family. Post-translationally, under oxidizing conditions two disulfide bonds are formed involving the reactive cysteines. Under reducing conditions zinc is bound to the reactive cysteines and the protein is inactive.

It is found in the cytoplasm. Its function is as follows. Redox regulated molecular chaperone. Protects both thermally unfolding and oxidatively damaged proteins from irreversible aggregation. Plays an important role in the bacterial defense system toward oxidative stress. The polypeptide is 33 kDa chaperonin (Bacillus velezensis (strain DSM 23117 / BGSC 10A6 / LMG 26770 / FZB42) (Bacillus amyloliquefaciens subsp. plantarum)).